We begin with the raw amino-acid sequence, 312 residues long: Olfactory receptor 2T8 (312 aa).

Topologically, residues 1–26 (MENGSYTSYFILLGLFNHTRAHQVLF) are extracellular. 2 N-linked (GlcNAc...) asparagine glycosylation sites follow: asparagine 3 and asparagine 17. Residues 27–47 (MMVLSIVLTSLFGNSLMILLI) form a helical membrane-spanning segment. Topologically, residues 48-55 (HWDHRLHT) are cytoplasmic. Residues 56–76 (PMYFLLSQLSLMDVMLVSTTV) form a helical membrane-spanning segment. Topologically, residues 77 to 96 (PKMAADYLTGSKAISRAGCG) are extracellular. A disulfide bridge connects residues cysteine 95 and cysteine 177. A helical transmembrane segment spans residues 97-117 (AQIFFLPTLGGGECFLLAAMA). The Cytoplasmic segment spans residues 118 to 143 (YDRYAAVCHPLRYPTLMSWQLCLRMN). A helical membrane pass occupies residues 144–164 (LSCWLLGAADGLLQAVATLSF). Residues 165-201 (PYCGAHEIDHFFCETPVLVRLACADTSVFENAMYICC) lie on the Extracellular side of the membrane. A helical transmembrane segment spans residues 202 to 222 (VLMLLVPFSLILSSYGLILAA). Topologically, residues 223 to 234 (VLHMRSTEARKK) are cytoplasmic. A helical transmembrane segment spans residues 235–255 (AFATCSSHVAVVGLFYGAAIF). The Extracellular portion of the chain corresponds to 256–269 (TYMRPKSHRSTNHD). Residues 270 to 290 (KVVSAFYTMFTPLLNPLIYSV) traverse the membrane as a helical segment. At 291 to 312 (KNSEVKGALTRCMGRCVALSRE) the chain is on the cytoplasmic side.

This sequence belongs to the G-protein coupled receptor 1 family.

The protein localises to the cell membrane. In terms of biological role, odorant receptor. This Homo sapiens (Human) protein is Olfactory receptor 2T8 (OR2T8).